A 205-amino-acid polypeptide reads, in one-letter code: Protein Nef (205 aa).

The N-myristoyl glycine; by host moiety is linked to residue G2. Phosphoserine; by host is present on S6. Positions 62–65 (DNEE) are acidic; interacts with host PACS1 and PACS2; stabilizes the interaction of NEF/MHC-I with host AP1M1; necessary for MHC-I internalization. The SH3-binding; interaction with Src family tyrosine kinases stretch occupies residues 69 to 78 (PVRPQVPTRP). A PxxP; stabilizes the interaction of NEF/MHC-I with host AP1M1; necessary for MHC-I internalization motif is present at residues 72-75 (PQVP). The segment at 108–124 (EILDLWVYHTQGFFPDW) is mediates dimerization, Nef-PTE1 interaction. The segment at 148–180 (LTEEQVEQANEGDNNCLLHPICQHGMEDEDKEV) is binding to ATP6V1H. Residues 164–165 (LL) carry the Dileucine internalization motif; necessary for CD4 internalization motif. Residues 174–175 (ED) carry the Diacidic; necessary for CD4 internalization motif.

Belongs to the lentivirus primate group Nef protein family. As to quaternary structure, monomer; cytosolic form. Homodimer; membrane bound form. Interacts with Nef associated p21-activated kinase (PAK2); this interaction activates PAK2. Associates with the Nef-MHC-I-AP1 complex; this complex is required for MHC-I internalization. Interacts (via C-terminus) with host PI3-kinase. Interacts with host PACS1; this interaction seems to be weak. Interacts with host PACS2. Interacts with host LCK and MAPK3; these interactions inhibit the kinase activity of the latter. Interacts with host ATP6V1H; this interaction may play a role in CD4 endocytosis. Associates with the CD4-Nef-AP2 complex; this complex is required for CD4 internalization. Interacts with host AP2 subunit alpha and AP2 subunit sigma2. Interacts with TCR-zeta chain; this interaction up-regulates the Fas ligand (FasL) surface expression. Interacts with host HCK, LYN, and SRC; these interactions activate the Src family kinases. Interacts with MAP3K5; this interaction inhibits the Fas and TNFR-mediated death signals. Interacts with beta-COP and PTE1. Interacts with human RACK1; this increases Nef phosphorylation by PKC. Interacts with TP53; this interaction decreases the half-life of TP53, protecting the infected cell against p53-mediated apoptosis. The virion-associated Nef proteins are cleaved by the viral protease to release the soluble C-terminal core protein. Nef is probably cleaved concomitantly with viral structural proteins on maturation of virus particles. In terms of processing, myristoylated. Post-translationally, phosphorylated on serine residues, probably by host PKCdelta and theta.

It is found in the host cell membrane. It localises to the virion. The protein localises to the secreted. The protein resides in the host Golgi apparatus membrane. In terms of biological role, factor of infectivity and pathogenicity, required for optimal virus replication. Alters numerous pathways of T-lymphocyte function and down-regulates immunity surface molecules in order to evade host defense and increase viral infectivity. Alters the functionality of other immunity cells, like dendritic cells, monocytes/macrophages and NK cells. In infected CD4(+) T-lymphocytes, down-regulates the surface MHC-I, mature MHC-II, CD4, CD28, CCR5 and CXCR4 molecules. Mediates internalization and degradation of host CD4 through the interaction of with the cytoplasmic tail of CD4, the recruitment of AP-2 (clathrin adapter protein complex 2), internalization through clathrin coated pits, and subsequent transport to endosomes and lysosomes for degradation. Diverts host MHC-I molecules to the trans-Golgi network-associated endosomal compartments by an endocytic pathway to finally target them for degradation. MHC-I down-regulation may involve AP-1 (clathrin adapter protein complex 1) or possibly Src family kinase-ZAP70/Syk-PI3K cascade recruited by PACS2. In consequence infected cells are masked for immune recognition by cytotoxic T-lymphocytes. Decreasing the number of immune receptors also prevents reinfection by more HIV particles (superinfection). Down-regulates host SERINC3 and SERINC5 thereby excluding these proteins from the viral particles. Virion infectivity is drastically higher when SERINC3 or SERINC5 are excluded from the viral envelope, because these host antiviral proteins impair the membrane fusion event necessary for subsequent virion penetration. Functionally, bypasses host T-cell signaling by inducing a transcriptional program nearly identical to that of anti-CD3 cell activation. Interaction with TCR-zeta chain up-regulates the Fas ligand (FasL). Increasing surface FasL molecules and decreasing surface MHC-I molecules on infected CD4(+) cells send attacking cytotoxic CD8+ T-lymphocytes into apoptosis. Its function is as follows. Plays a role in optimizing the host cell environment for viral replication without causing cell death by apoptosis. Protects the infected cells from apoptosis in order to keep them alive until the next virus generation is ready to strike. Inhibits the Fas and TNFR-mediated death signals by blocking MAP3K5/ASK1. Decreases the half-life of TP53, protecting the infected cell against p53-mediated apoptosis. Inhibits the apoptotic signals regulated by the Bcl-2 family proteins through the formation of a Nef/PI3-kinase/PAK2 complex that leads to activation of PAK2 and induces phosphorylation of host BAD. In terms of biological role, extracellular Nef protein targets CD4(+) T-lymphocytes for apoptosis by interacting with CXCR4 surface receptors. The sequence is that of Protein Nef from Simian immunodeficiency virus (isolate CPZ GAB1) (SIV-cpz).